Consider the following 673-residue polypeptide: Probable potassium transport system protein Kup 1 (673 aa).

A run of 13 helical transmembrane segments spans residues 14–34, 58–78, 101–121, 147–167, 175–195, 196–216, 220–240, 252–272, 294–314, 345–365, 374–394, 403–423, and 427–447; these read GAGF…SPLY, LSLI…WIAL, WLII…ALTP, LPIV…QRFG, FGPV…INLF, GDFS…LLSP, AGIF…ALYS, VSWP…AAWL, LIIF…QALI, LYIP…VVYF, AYGL…TVYL, VFVV…FAAS, and FLHG…VMAI.

The protein belongs to the HAK/KUP transporter (TC 2.A.72) family.

Its subcellular location is the cell membrane. It carries out the reaction K(+)(in) + H(+)(in) = K(+)(out) + H(+)(out). Functionally, transport of potassium into the cell. Likely operates as a K(+):H(+) symporter. The polypeptide is Probable potassium transport system protein Kup 1 (Lactococcus lactis subsp. cremoris (strain SK11)).